The following is a 72-amino-acid chain: High-potential iron-sulfur protein isozyme 1 (72 aa).

[4Fe-4S] cluster-binding residues include Cys-34, Cys-37, Cys-51, and Cys-65.

This sequence belongs to the high-potential iron-sulfur protein (HiPIP) family. As to quaternary structure, homodimer.

In terms of biological role, specific class of high-redox-potential 4Fe-4S ferredoxins. Functions in anaerobic electron transport in most purple and in some other photosynthetic bacteria and in at least one genus (Paracoccus) of halophilic, denitrifying bacteria. The polypeptide is High-potential iron-sulfur protein isozyme 1 (hip1) (Ectothiorhodospira shaposhnikovii (Ectothiorhodospira vacuolata)).